A 215-amino-acid polypeptide reads, in one-letter code: Pyridoxine/pyridoxamine 5'-phosphate oxidase (215 aa).

Substrate-binding positions include 9–12 and K67; that span reads RRDY. FMN contacts are provided by residues 62-67, 77-78, K84, and Q106; these read RVVLLK and FT. The substrate site is built by Y124, R128, and S132. FMN contacts are provided by residues 141–142 and W186; that span reads QS. Substrate is bound at residue 192–194; that stretch reads RLH. Position 196 (R196) interacts with FMN.

This sequence belongs to the pyridoxamine 5'-phosphate oxidase family. In terms of assembly, homodimer. The cofactor is FMN.

The enzyme catalyses pyridoxamine 5'-phosphate + O2 + H2O = pyridoxal 5'-phosphate + H2O2 + NH4(+). It catalyses the reaction pyridoxine 5'-phosphate + O2 = pyridoxal 5'-phosphate + H2O2. It participates in cofactor metabolism; pyridoxal 5'-phosphate salvage; pyridoxal 5'-phosphate from pyridoxamine 5'-phosphate: step 1/1. The protein operates within cofactor metabolism; pyridoxal 5'-phosphate salvage; pyridoxal 5'-phosphate from pyridoxine 5'-phosphate: step 1/1. Its function is as follows. Catalyzes the oxidation of either pyridoxine 5'-phosphate (PNP) or pyridoxamine 5'-phosphate (PMP) into pyridoxal 5'-phosphate (PLP). This Chromohalobacter salexigens (strain ATCC BAA-138 / DSM 3043 / CIP 106854 / NCIMB 13768 / 1H11) protein is Pyridoxine/pyridoxamine 5'-phosphate oxidase.